Here is a 572-residue protein sequence, read N- to C-terminus: Protein misato homolog 1 (572 aa).

The protein belongs to the misato family.

It localises to the mitochondrion outer membrane. It is found in the cytoplasm. Its function is as follows. Involved in the regulation of mitochondrial distribution and morphology. Required for mitochondrial fusion and mitochondrial network formation. The protein is Protein misato homolog 1 (MSTO1) of Bos taurus (Bovine).